Reading from the N-terminus, the 310-residue chain is 4-hydroxyproline 2-epimerase (310 aa).

The Proton acceptor role is filled by C85. Residues 86–87 (GH), H205, and D231 each bind substrate. C235 (proton donor) is an active-site residue. 236–237 (GT) contributes to the substrate binding site.

Belongs to the proline racemase family.

It carries out the reaction trans-4-hydroxy-L-proline = cis-4-hydroxy-D-proline. Functionally, catalyzes the epimerization of trans-4-hydroxy-L-proline (t4LHyp) to cis-4-hydroxy-D-proline (c4DHyp). May be involved in a degradation pathway of t4LHyp, which would allow L.aggregata to grow on t4LHyp as a sole carbon source. Displays no proline racemase activity. The chain is 4-hydroxyproline 2-epimerase from Roseibium aggregatum (strain ATCC 25650 / DSM 13394 / JCM 20685 / NBRC 16684 / NCIMB 2208 / IAM 12614 / B1) (Stappia aggregata).